We begin with the raw amino-acid sequence, 313 residues long: B3 domain-containing transcription factor FUS3 (313 aa).

The segment at residues 92 to 194 (FQKELKNSDV…NYVIQARKAS (103 aa)) is a DNA-binding region (TF-B3).

In terms of assembly, interacts with KIN10. Phosphorylation by KIN10 increases its stability. Phosphorylated at one or more of the Ser-55, Ser-56 and/or Ser-57 residues. In terms of tissue distribution, expressed in cotyledons and hypocotyls.

The protein resides in the nucleus. Phosphorylation by KIN10 is required to positively regulates embryogenesis, seed yield, and plant growth at high temperature. Transcription regulator involved in gene regulation during late embryogenesis. Its expression to the epidermis is sufficient to control foliar organ identity by regulating positively the synthesis abscisic acid (ABA) and negatively gibberellin production. Negatively regulates TTG1 in the embryo. Positively regulates the abundance of the ABI3 protein in the seed. Cooperates with KIN10 to regulate developmental phase transitions and lateral organ development and act both as positive regulators of abscisic acid (ABA) signaling during germination. The sequence is that of B3 domain-containing transcription factor FUS3 (FUS3) from Arabidopsis thaliana (Mouse-ear cress).